The chain runs to 106 residues: MMDSSPEKTNLELLYEQVCEQGREFEVVFYPMLPRLYEMMLPSLEARLNFLSVGYRHVAFSRYVHGDVDCVHREVMAQKMVLLTSILSKLLNVNGILEHQEYLNTE.

Belongs to the herpesviridae TRM2 protein family. As to quaternary structure, associates with TRM1 and TRM3 to form the tripartite terminase complex.

Its subcellular location is the host nucleus. Component of the molecular motor that translocates viral genomic DNA in empty capsid during DNA packaging. Forms a tripartite terminase complex together with TRM1 and TRM3 in the host cytoplasm. Once the complex reaches the host nucleus, it interacts with the capsid portal vertex. This portal forms a ring in which genomic DNA is translocated into the capsid. The sequence is that of Tripartite terminase subunit 2 from Homo sapiens (Human).